The chain runs to 533 residues: DELLA protein GAI (533 aa).

Residues 1-12 (MKRDHHHHHHQD) are compositionally biased toward basic residues. Residues 1-24 (MKRDHHHHHHQDKKTMMMNEEDDG) are disordered. Positions 28–32 (DELLA) match the DELLA motif motif. Residues 50–54 (LEQLE) carry the LEXLE motif motif. Residues 73–77 (VHYNP) carry the VHYNP motif motif. The GRAS domain maps to 160–529 (VDSQENGVRL…RPLIATSAWK (370 aa)). The leucine repeat I (LRI) stretch occupies residues 167 to 221 (VRLVHALLACAEAVQKENLTVAEALVKQIGFLAVSQIGAMRKVATYFAEALARRI). Residues 174–178 (LACAE) carry the LxCxE motif motif. The segment at 240–305 (QMHFYETCPY…GGPPVFRLTG (66 aa)) is VHIID. The VHIID signature appears at 271–275 (VHVID). A leucine repeat II (LRII) region spans residues 319–351 (EVGCKLAHLAEAIHVEFEYRGFVANTLADLDAS). The PFYRE stretch occupies residues 363 to 450 (VAVNSVFELH…EVYLGKQICN (88 aa)). An LXXLL motif motif is present at residues 371-375 (LHKLL). An SAW region spans residues 453–529 (ACDGPDRVER…RPLIATSAWK (77 aa)).

The protein belongs to the GRAS family. DELLA subfamily. In terms of assembly, interacts directly with the GID2/SLY1 component of the SCF(GID2) complex. Interacts (via N-terminus) with GID1A, GID1B and GID1B (via N-terminus). Interacts with the BOI proteins BOI, BRG1, BRG2, BRG3 and NUP58. Interacts with TOPP4. Interacts with TCP14 and TCP15. Interacts with FLZ5. Binds to and coactivates GAF1/IDD2 and ENY/IDD1 at the promoter of GA20OX2 gene. Binds to PDF2 and ATML1. Interacts with the prefoldin alpha subunits PFD3 and PFD5 in the nucleus. Phosphorylated. Post-translationally, gibberellin (GA) induces dephosphorylation of GAI by TOPP4 and subsequent degradation by the proteasomal pathway. In terms of processing, may be ubiquitinated, as suggested by its interaction with GID2. Ubiquitination is however unsure since in contrast to other DELLA proteins, it is not ubiquitinated and degraded upon GA application. Nevertheless, ubiquitination may be triggered by other processes. Ubiquitously expressed. Expressed in rosette leaves, roots, stems and inflorescences of greenhouse grown.

The protein localises to the nucleus. Its activity is regulated as follows. Transcription activation is repressed by gibberellic acid GA(3) in the presence of TPR4. In terms of biological role, transcriptional regulator that acts as a repressor of the gibberellin (GA) signaling pathway. Transcription coactivator of the zinc finger transcription factors GAF1/IDD2 and ENY/IDD1 in regulation of gibberellin homeostasis and signaling. No effect of the BOI proteins on its stability. Probably acts by participating in large multiprotein complexes that repress transcription of GA-inducible genes. Positively regulates XERICO expression. In contrast to RGA, it is less sensitive to GA. Its activity is probably regulated by other phytohormones such as auxin and ethylene. Involved in the regulation of seed dormancy and germination, including glucose-induced delay of seed germination. Involved in the process leading to microtubules (MTs) dissociation in response to gibberellic acid (GA) probably by mediating the translocation of the prefoldin co-chaperone complex from the cytoplasm to the nucleus. The chain is DELLA protein GAI from Arabidopsis thaliana (Mouse-ear cress).